Consider the following 342-residue polypeptide: Dihydroorotase (342 aa).

His13 and His15 together coordinate Zn(2+). Substrate contacts are provided by residues 15–17 and Asn41; that span reads HLR. Lys97, His134, and His172 together coordinate Zn(2+). N6-carboxylysine is present on Lys97. His134 is a substrate binding site. Residue Leu217 participates in substrate binding. Residue Asp245 participates in Zn(2+) binding. The active site involves Asp245. The substrate site is built by His249 and Ala261.

The protein belongs to the metallo-dependent hydrolases superfamily. DHOase family. Class II DHOase subfamily. In terms of assembly, homodimer. The cofactor is Zn(2+).

The enzyme catalyses (S)-dihydroorotate + H2O = N-carbamoyl-L-aspartate + H(+). It participates in pyrimidine metabolism; UMP biosynthesis via de novo pathway; (S)-dihydroorotate from bicarbonate: step 3/3. In terms of biological role, catalyzes the reversible cyclization of carbamoyl aspartate to dihydroorotate. This chain is Dihydroorotase, found in Shewanella amazonensis (strain ATCC BAA-1098 / SB2B).